A 189-amino-acid chain; its full sequence is RxLR effector protein CRE18 (189 aa).

The signal sequence occupies residues 1–23 (MSKLFYAFAVLAVHVLTSSPTTA). The RxLR-dEER signature appears at 47–68 (RFLRSIHEGEDSLKPSAFSEER).

It belongs to the RxLR effector family.

Its subcellular location is the secreted. It localises to the host cytoplasm. The protein resides in the host nucleus. Its function is as follows. Effector that is involved in host plant infection. Contributes to virulence during the early infection stage, by inhibiting plant defense responses induced by both PAMP-triggered immunity (PTI) and effector-triggered immunity (ETI). This is RxLR effector protein CRE18 from Phytophthora infestans (strain T30-4) (Potato late blight agent).